The following is a 133-amino-acid chain: Transcription antitermination protein NusB (133 aa).

This sequence belongs to the NusB family.

Functionally, involved in transcription antitermination. Required for transcription of ribosomal RNA (rRNA) genes. Binds specifically to the boxA antiterminator sequence of the ribosomal RNA (rrn) operons. The protein is Transcription antitermination protein NusB of Shewanella denitrificans (strain OS217 / ATCC BAA-1090 / DSM 15013).